Consider the following 251-residue polypeptide: CDP-diacylglycerol pyrophosphatase (251 aa).

Residues 5 to 25 (GYFLLAVIVIVAAAGVGYWKF) traverse the membrane as a helical segment.

Belongs to the Cdh family.

The protein resides in the cell inner membrane. The enzyme catalyses a CDP-1,2-diacyl-sn-glycerol + H2O = a 1,2-diacyl-sn-glycero-3-phosphate + CMP + 2 H(+). Its pathway is phospholipid metabolism; CDP-diacylglycerol degradation; phosphatidate from CDP-diacylglycerol: step 1/1. The polypeptide is CDP-diacylglycerol pyrophosphatase (Salmonella typhi).